The sequence spans 180 residues: Large ribosomal subunit protein uL6 (180 aa).

Belongs to the universal ribosomal protein uL6 family. Part of the 50S ribosomal subunit.

Its function is as follows. This protein binds to the 23S rRNA, and is important in its secondary structure. It is located near the subunit interface in the base of the L7/L12 stalk, and near the tRNA binding site of the peptidyltransferase center. The sequence is that of Large ribosomal subunit protein uL6 from Clostridium botulinum (strain Loch Maree / Type A3).